Consider the following 273-residue polypeptide: Large ribosomal subunit protein uL2 (273 aa).

Disordered stretches follow at residues T28 to G55 and G222 to K273. Basic residues predominate over residues Y255 to K273.

Belongs to the universal ribosomal protein uL2 family. As to quaternary structure, part of the 50S ribosomal subunit. Forms a bridge to the 30S subunit in the 70S ribosome.

In terms of biological role, one of the primary rRNA binding proteins. Required for association of the 30S and 50S subunits to form the 70S ribosome, for tRNA binding and peptide bond formation. It has been suggested to have peptidyltransferase activity; this is somewhat controversial. Makes several contacts with the 16S rRNA in the 70S ribosome. This is Large ribosomal subunit protein uL2 from Treponema pallidum (strain Nichols).